The following is a 136-amino-acid chain: Protein PsiE (136 aa).

4 helical membrane-spanning segments follow: residues 15–35, 55–75, 83–103, and 108–128; these read ILQN…VVFL, YELV…ALIV, HFPL…LIIV, and PMDV…LWLC.

This sequence belongs to the PsiE family.

It localises to the cell inner membrane. The protein is Protein PsiE of Salmonella agona (strain SL483).